Consider the following 357-residue polypeptide: RGG repeats nuclear RNA binding protein C (357 aa).

Position 2 is an N-acetylalanine (alanine 2). The tract at residues 25–232 (SQKVEKAAAA…AEEAEAREMT (208 aa)) is disordered. Low complexity predominate over residues 31–45 (AAAAVQPPKAAKFPT). 2 stretches are compositionally biased toward gly residues: residues 63–82 (GGRG…GNGG) and 114–128 (SRGG…GGGR). The segment covering 143–155 (DVERPPRNYDRHS) has biased composition (basic and acidic residues). The segment covering 159–172 (HGTGMKRNGGGRGN) has biased composition (gly residues). Over residues 190 to 232 (EVEKSPVAEKQGGEDETPEAKKELTAEEKAQKEAEEAEAREMT) the composition is skewed to basic and acidic residues. The 61-residue stretch at 239–299 (ILEEKKKALQ…KDATEKAKKS (61 aa)) folds into the FF domain. A disordered region spans residues 308 to 357 (PADGKRYNGRGGGSRGRGGRGGRGEGGNQRYAKEAAAPAIGDTAQFPSLG). The span at 316–334 (GRGGGSRGRGGRGGRGEGG) shows a compositional bias: gly residues. Residue serine 355 is modified to Phosphoserine.

The protein belongs to the SERBP1-HABP4 family.

The protein localises to the nucleus. It is found in the cytoplasm. Its subcellular location is the perinuclear region. Its function is as follows. Ribosome-binding protein that acts as a regulator of mRNA translation by promoting ribosome inactivation. Binds RNA. In Arabidopsis thaliana (Mouse-ear cress), this protein is RGG repeats nuclear RNA binding protein C.